We begin with the raw amino-acid sequence, 580 residues long: Potassium-transporting ATPase potassium-binding subunit (580 aa).

Helical transmembrane passes span 3–23 (ASGA…SVPL), 65–85 (DYAF…YALQ), 136–156 (GLGV…VALI), 179–199 (LYIL…QGVV), 263–283 (LSNF…CHTF), 293–313 (GWAV…ACVA), 399–419 (GLYG…LMVG), 436–456 (MASL…AIAV), 504–524 (AIGV…LALA), and 546–566 (LFVG…FVPA).

The protein belongs to the KdpA family. As to quaternary structure, the system is composed of three essential subunits: KdpA, KdpB and KdpC.

The protein localises to the cell inner membrane. In terms of biological role, part of the high-affinity ATP-driven potassium transport (or Kdp) system, which catalyzes the hydrolysis of ATP coupled with the electrogenic transport of potassium into the cytoplasm. This subunit binds the periplasmic potassium ions and delivers the ions to the membrane domain of KdpB through an intramembrane tunnel. The sequence is that of Potassium-transporting ATPase potassium-binding subunit from Sorangium cellulosum (strain So ce56) (Polyangium cellulosum (strain So ce56)).